Here is a 472-residue protein sequence, read N- to C-terminus: Ammonium transporter Rh type C (472 aa).

The Cytoplasmic segment spans residues 1–9 (MAWNTNLRW). The chain crosses the membrane as a helical span at residues 10–30 (RLPLTCLLLEVVMVILFGVFV). Residues 31–51 (RYDFDADAHWWSWRTEFYYRY) are Extracellular-facing. Residues 52-72 (PSFQDVHVMVFVGFGFLMTFL) form a helical membrane-spanning segment. Topologically, residues 73 to 76 (QRYG) are cytoplasmic. A helical membrane pass occupies residues 77–97 (FSAVGFNFLLAAFGIQWALLM). Topologically, residues 98-114 (QGWFHFLQGRYIVVGVE) are extracellular. Residues 115-135 (NLINADFCVASVCVAFGAVLG) traverse the membrane as a helical segment. Topologically, residues 136-139 (KVSP) are cytoplasmic. A helical transmembrane segment spans residues 140–160 (IQLLIMTFFQVTLFAVNEFIL). Residues 161–168 (LNLLKVKD) are Extracellular-facing. Residues 169-191 (AGGSMTIHTFGAYFGLTVTRILY) form a helical membrane-spanning segment. Topologically, residues 192–209 (RRNLEQSKERQNSVYQSD) are cytoplasmic. A helical membrane pass occupies residues 210–230 (LFAMIGTLFLWMYWPSFNSAI). Residues 231 to 241 (SYHGDSQHRAA) lie on the Extracellular side of the membrane. The helical transmembrane segment at 242-262 (INTYCSLAACVLTSVAISSAL) threads the bilayer. Over 263–294 (HKKGKLDMVHIQNATPAGGVAVGTAAEMMLMP) the chain is Cytoplasmic. Residues 295–315 (YGALIVGFVCGIISTLGFVYL) form a helical membrane-spanning segment. Residues 316–336 (TPFLESRLHIQDTCGINNLHG) are Extracellular-facing. The chain crosses the membrane as a helical span at residues 337-357 (IPGIIGGIVGAVTAASASLEV). Residues 358–388 (YGKEGLVHSFDFQGFKRDWTARTQGKFQIYG) are Cytoplasmic-facing. Residues 389–409 (LLVTLAMALMGGIIVGVGLIL) traverse the membrane as a helical segment. The Extracellular portion of the chain corresponds to 410 to 450 (RLPFWGQPSDENCFEDAVYWEMPEGNSTVYIPEDPTFKPSG). An N-linked (GlcNAc...) asparagine glycan is attached at N435. A helical membrane pass occupies residues 451–471 (PSVPSVPMVSPLPMASSVPLV). P472 is a topological domain (cytoplasmic).

The protein belongs to the ammonium transporter (TC 2.A.49) family. Rh subfamily. As to quaternary structure, homotrimer. N-glycosylated.

The protein resides in the cell membrane. Its subcellular location is the apical cell membrane. The enzyme catalyses NH4(+)(in) = NH4(+)(out). It carries out the reaction methylamine(out) = methylamine(in). The catalysed reaction is CO2(out) = CO2(in). Its function is as follows. Ammonium transporter involved in the maintenance of acid-base homeostasis. Transports ammonium and its related derivative methylammonium across the plasma membrane of epithelial cells likely contributing to renal transepithelial ammonia transport and ammonia metabolism. Postulated to primarily mediate an electroneutral bidirectional transport of NH3 ammonia species according to a mechanism that implies interaction of an NH4(+) ion with acidic residues of the pore entry followed by dissociation of NH4(+) into NH3 and H(+). As a result NH3 transits through the central pore and is protonated on the extracellular side reforming NH4(+). May act as a CO2 channel providing for renal acid secretion. The chain is Ammonium transporter Rh type C (RHCG) from Pongo abelii (Sumatran orangutan).